We begin with the raw amino-acid sequence, 158 residues long: SsrA-binding protein (158 aa).

Belongs to the SmpB family.

It localises to the cytoplasm. In terms of biological role, required for rescue of stalled ribosomes mediated by trans-translation. Binds to transfer-messenger RNA (tmRNA), required for stable association of tmRNA with ribosomes. tmRNA and SmpB together mimic tRNA shape, replacing the anticodon stem-loop with SmpB. tmRNA is encoded by the ssrA gene; the 2 termini fold to resemble tRNA(Ala) and it encodes a 'tag peptide', a short internal open reading frame. During trans-translation Ala-aminoacylated tmRNA acts like a tRNA, entering the A-site of stalled ribosomes, displacing the stalled mRNA. The ribosome then switches to translate the ORF on the tmRNA; the nascent peptide is terminated with the 'tag peptide' encoded by the tmRNA and targeted for degradation. The ribosome is freed to recommence translation, which seems to be the essential function of trans-translation. This chain is SsrA-binding protein, found in Roseiflexus sp. (strain RS-1).